The following is a 445-amino-acid chain: Xylose isomerase (445 aa).

Active-site residues include His-107 and Asp-110. Positions 238, 274, 277, 302, 313, 315, and 345 each coordinate Mg(2+).

Belongs to the xylose isomerase family. In terms of assembly, homotetramer. Mg(2+) serves as cofactor.

Its subcellular location is the cytoplasm. The catalysed reaction is alpha-D-xylose = alpha-D-xylulofuranose. This Priestia megaterium (strain DSM 319 / IMG 1521) (Bacillus megaterium) protein is Xylose isomerase (xylA).